Reading from the N-terminus, the 1177-residue chain is Topoisomerase 1-associated factor 1 (1177 aa).

Disordered regions lie at residues alanine 575 to leucine 597, arginine 791 to serine 815, leucine 874 to glutamate 1001, and leucine 1021 to glutamate 1177. A compositionally biased stretch (acidic residues) spans isoleucine 583 to leucine 597. The span at arginine 791–glycine 803 shows a compositional bias: basic and acidic residues. 2 stretches are compositionally biased toward acidic residues: residues phenylalanine 911–valine 921 and glutamate 954–leucine 963. The span at isoleucine 981–aspartate 991 shows a compositional bias: basic and acidic residues. The segment covering serine 1086 to glycine 1096 has biased composition (polar residues). 2 stretches are compositionally biased toward acidic residues: residues glutamate 1108 to leucine 1118 and threonine 1146 to alanine 1155.

This sequence belongs to the timeless family. Component of the fork protection complex (FPC) consisting of tof1 and csm3.

It is found in the nucleus. Functionally, forms a fork protection complex (FPC) with csm3 and which is required for chromosome segregation during meiosis and DNA damage repair. FPC coordinates leading and lagging strand synthesis and moves with the replication fork. FPC stabilizes replication forks in a configuration that is recognized by replication checkpoint sensors. In Neosartorya fischeri (strain ATCC 1020 / DSM 3700 / CBS 544.65 / FGSC A1164 / JCM 1740 / NRRL 181 / WB 181) (Aspergillus fischerianus), this protein is Topoisomerase 1-associated factor 1 (tof1).